We begin with the raw amino-acid sequence, 183 residues long: Putative manganese efflux pump MntP (183 aa).

A run of 6 helical transmembrane segments spans residues 8-28 (IIALSMMALALGMDAFSVALG), 40-60 (FYIGLTIGLFHILMPLAGMAV), 72-92 (ATYAGGALLLWLGGQMIIASF), 108-128 (LFFAFSVSLDSFSVGLSLGIF), 133-153 (MVTILLFGLFSMVLTWVGLFV), and 163-183 (SYSEALGGSILLAFGLKLLFL).

Belongs to the MntP (TC 9.B.29) family.

The protein localises to the cell membrane. Probably functions as a manganese efflux pump. This chain is Putative manganese efflux pump MntP, found in Geobacillus kaustophilus (strain HTA426).